We begin with the raw amino-acid sequence, 392 residues long: THO complex subunit MFT1 (392 aa).

2 stretches are compositionally biased toward acidic residues: residues aspartate 258–glutamate 271 and asparagine 290–glycine 330. Residues aspartate 258–lysine 392 form a disordered region. Serine 266 is subject to Phosphoserine. Residues glutamate 331 to asparagine 344 show a composition bias toward polar residues. Over residues glutamate 345–aspartate 367 the composition is skewed to acidic residues. The span at glycine 377 to lysine 392 shows a compositional bias: polar residues.

In terms of assembly, component of the THO complex, which is composed of HPR1, MFT1, THO2 and THP2. Together with SUB2, TEX1 and YRA1, THO forms the transcription/export (TREX) complex. THO associates with DNA and RNA in vitro.

Its subcellular location is the nucleus. Functionally, component the THO subcomplex of the TREX complex, which operates in coupling transcription elongation to mRNA export. The THO complex is recruited to transcribed genes and moves along the gene with the elongating polymerase during transcription. THO is important for stabilizing nascent RNA in the RNA polymerase II elongation complex by preventing formation of DNA:RNA hybrids behind the elongating polymerase. It functions in cotranscriptional formation of an export-competent messenger ribonucleoprotein particle (mRNP) by facilitating the loading of ATP-dependent RNA helicase SUB2 and the mRNA export factor YRA1 along the nascent mRNA. This Saccharomyces cerevisiae (strain ATCC 204508 / S288c) (Baker's yeast) protein is THO complex subunit MFT1 (MFT1).